Here is a 368-residue protein sequence, read N- to C-terminus: MNKLNWRRIVLKVGSALIAPDQDGCRSRYILTIAQFIVRCRARGIEVILVSSGSVAAGAHLFPSDTARSVVMKKAMAAAGQTEMIAMWDRFFDFPSAQLLLTHGDLRDHERYQSIRETVFTLLEHGVLPIINENDAVTTDDLKVGDNDNLSAMVAAAADADALLIFSDVDGLYDKNPNLHDDAILLPEIKSIDDSIYAMAGCATSAVGTGGMKTKIEAAEKATSHGISTYIINGFKEETFTRLLAGENPGTIFLPYEKPMQDSVHWMTHTANEQGEVVVDGSFDKSLEGETGCIRGDEIMAVHGEFAIGDTILVRSEDGTRLAKATANYSSCLLSFIADNEQSEFSEKMQDSIGPVISEKHIALLEKS.

An ATP-binding site is contributed by K12. Substrate contacts are provided by S52, D135, and N147. ATP is bound by residues 167–168 (SD) and 209–215 (TGGMKTK). One can recognise a PUA domain in the interval 274 to 348 (QGEVVVDGSF…DNEQSEFSEK (75 aa)).

The protein belongs to the glutamate 5-kinase family.

It localises to the cytoplasm. It carries out the reaction L-glutamate + ATP = L-glutamyl 5-phosphate + ADP. The protein operates within amino-acid biosynthesis; L-proline biosynthesis; L-glutamate 5-semialdehyde from L-glutamate: step 1/2. Functionally, catalyzes the transfer of a phosphate group to glutamate to form L-glutamate 5-phosphate. The sequence is that of Glutamate 5-kinase 1 from Pseudoalteromonas translucida (strain TAC 125).